The following is a 141-amino-acid chain: uncharacterized protein (141 aa).

Residues 4–139 enclose the HTH marR-type domain; it reads RTQMMYDMET…LIELFSKLDK (136 aa). A DNA-binding region (H-T-H motif) is located at residues 53-76; sequence VTEFAPILEVSASHITAVTDALVE.

This is an uncharacterized protein from Bacillus subtilis (strain 168).